The primary structure comprises 847 residues: Leucine--tRNA ligase (847 aa).

The 'HIGH' region motif lies at 39–49 (PYPSGALHMGH). A 'KMSKS' region motif is present at residues 613–617 (KMSKS). K616 provides a ligand contact to ATP.

It belongs to the class-I aminoacyl-tRNA synthetase family.

The protein localises to the cytoplasm. The catalysed reaction is tRNA(Leu) + L-leucine + ATP = L-leucyl-tRNA(Leu) + AMP + diphosphate. In Gloeobacter violaceus (strain ATCC 29082 / PCC 7421), this protein is Leucine--tRNA ligase.